The primary structure comprises 30 residues: Urease subunit alpha (30 aa).

Belongs to the metallo-dependent hydrolases superfamily. Urease alpha subunit family. As to quaternary structure, heterotrimer of UreA (gamma), UreB (beta) and UreC (alpha) subunits. Three heterotrimers associate to form the active enzyme. The cofactor is Ni cation.

The protein resides in the cytoplasm. It carries out the reaction urea + 2 H2O + H(+) = hydrogencarbonate + 2 NH4(+). The protein operates within nitrogen metabolism; urea degradation; CO(2) and NH(3) from urea (urease route): step 1/1. The protein is Urease subunit alpha (ureC) of Escherichia coli.